We begin with the raw amino-acid sequence, 219 residues long: MKRITKLLASHSLKSLMAKKNKRSQQKNKCLKPEKDPSTVKRLLEDPPRKKRYLQPLENPPTESYGDDEKMETEEEGEKYLGKNLPASAFIIVAAERHDSDSYSETELEKKICGSVVVAKMNDDKMVSTDTKKKYFQRILSDDDKIVLLQGMVDFQNDKGTISYDDMTGFIDTVKNIISFQANSRQFTTKIRRLKDKFVQKRNKGVDENSLANVEIYEI.

A disordered region spans residues 9–77 (ASHSLKSLMA…DEKMETEEEG (69 aa)). Positions 17–30 (MAKKNKRSQQKNKC) are enriched in basic residues. Over residues 31–48 (LKPEKDPSTVKRLLEDPP) the composition is skewed to basic and acidic residues. Residues 65–77 (YGDDEKMETEEEG) are compositionally biased toward acidic residues.

This sequence belongs to the GeBP family.

The polypeptide is Probable transcription factor At1g55950 (Arabidopsis thaliana (Mouse-ear cress)).